The following is a 288-amino-acid chain: Transformer-2 protein homolog beta (288 aa).

2 disordered regions span residues 1–114 and 196–225; these read MSDS…RANP and TKRP…YDRG. Ser2 carries the N-acetylserine modification. Phosphoserine occurs at positions 2, 4, and 14. Residues 17–28 are compositionally biased toward low complexity; sequence ASRSGSAHGSGK. The residue at position 29 (Ser29) is a Phosphoserine. Thr33 carries the phosphothreonine modification. The segment covering 59-109 has biased composition (basic residues); sequence RSRRSSRRHYTRSRSRSRSHRRSRSRSYSRDYRRRHSHSHSPMSTRRRHVG. Phosphoserine occurs at positions 83, 85, 87, 95, 97, and 99. Thr103 is subject to Phosphothreonine. An RRM domain is found at 118 to 196; that stretch reads CCLGVFGLSL…RRIRVDFSIT (79 aa). Residues 193–230 form a linker region; it reads FSITKRPHTPTPGIYMGRPTYGSSRRRDYYDRGYDRGY. Lys197 is covalently cross-linked (Glycyl lysine isopeptide (Lys-Gly) (interchain with G-Cter in SUMO2)). A phosphothreonine mark is found at Thr201 and Thr203. Residues Ser215 and Ser237 each carry the phosphoserine modification. Arg241 is subject to Asymmetric dimethylarginine; alternate. At Arg241 the chain carries Dimethylated arginine; alternate. Position 241 is an omega-N-methylarginine; alternate (Arg241). Residues 242-288 are disordered; that stretch reads GGGGGGGGWRAAQDRDQIYRRRSPSPYYSRGGYRSRSRSRSYSPRRY. Positions 274-288 are enriched in basic residues; sequence YRSRSRSRSYSPRRY.

The protein belongs to the splicing factor SR family. Found in a pre-mRNA exonic splicing enhancer (ESE) complex with TRA2B/SFRS10, SNRNP70, SNRPA1 and SRRM1. Binds to A3 enhancer proteins SFRS4, SFRS5, SFRS6 and SFRS9. Interacts with CPSF6, RBMY1A1, RBMX, RNPS1 and phosphorylated SFRS13A. Interacts with SAFB/SAFB1. Interacts with ILDR1 (via C-terminus) and ILDR2. Phosphorylated in the RS domains.

The protein localises to the nucleus. Sequence-specific RNA-binding protein which participates in the control of pre-mRNA splicing. Can either activate or suppress exon inclusion. Acts additively with RBMX to promote exon 7 inclusion of the survival motor neuron SMN2. Activates the splicing of MAPT/Tau exon 10. Alters pre-mRNA splicing patterns by antagonizing the effects of splicing regulators, like RBMX. Binds to the AG-rich SE2 domain in the SMN exon 7 RNA. Binds to pre-mRNA. This chain is Transformer-2 protein homolog beta (TRA2B), found in Bos taurus (Bovine).